The sequence spans 545 residues: Sphingosine-1-phosphate lyase (545 aa).

The Lumenal portion of the chain corresponds to 1 to 26 (MRPFSGSDCLKPVTEGINRAFGAKEP). Residues 27–47 (WQVATITATTVLGGVWLWTVI) traverse the membrane as a helical; Signal-anchor for type III membrane protein segment. Residues 48 to 545 (CQDENLYIRG…HSMYYTPSQK (498 aa)) lie on the Cytoplasmic side of the membrane. N6-(pyridoxal phosphate)lysine is present on Lys-342.

Belongs to the group II decarboxylase family. Sphingosine-1-phosphate lyase subfamily. It depends on pyridoxal 5'-phosphate as a cofactor. Localized to the developing gut primordium during embryogenesis.

The protein localises to the endoplasmic reticulum membrane. The enzyme catalyses sphinganine 1-phosphate = hexadecanal + phosphoethanolamine. It functions in the pathway lipid metabolism; sphingolipid metabolism. Functionally, cleaves phosphorylated sphingoid bases (PSBs), such as sphingosine-1-phosphate, into fatty aldehydes and phosphoethanolamine. Sphingolipid catabolism is required for normal development including viability, reproduction and muscle development. This chain is Sphingosine-1-phosphate lyase, found in Drosophila melanogaster (Fruit fly).